The chain runs to 1354 residues: Tensin homolog (1354 aa).

Positions 38-207 constitute a Phosphatase tensin-type domain; sequence MKDRKEGVQV…GYFSSLLSGR (170 aa). Cys-144 (phosphocysteine intermediate) is an active-site residue. One can recognise a C2 tensin-type domain in the interval 212–337; that stretch reads SDPLYLHNII…VTVELVVSHT (126 aa). 7 disordered regions span residues 380–442, 597–616, 638–660, 692–720, 734–754, 794–879, and 1015–1035; these read EYSE…DVVP, STLQRRPKPPARSGSYRTLN, SNTAPLPPPRRQEQHAGTRSVQL, DVRGGQQQQQEQHNASNDFNFSNTLNNTP, SVTTPRNHHFSTPSREQEADA, AANN…DRQR, and NGERGGSGHAAGGGGGGHNGY. Polar residues predominate over residues 391–401; the sequence is SSKSANPINNN. Pro residues predominate over residues 408–417; sequence VGPPVPPKPS. Polar residues-rich tracts occupy residues 704-720, 734-747, and 794-804; these read HNASNDFNFSNTLNNTP, SVTTPRNHHFSTPS, and AANNDENQHNL. Residues 821 to 843 show a composition bias toward basic and acidic residues; that stretch reads AEFRREEERLRNTRSPYGEERWR. Over residues 1017-1033 the composition is skewed to gly residues; that stretch reads ERGGSGHAAGGGGGGHN. Residues 1083-1187 enclose the SH2 domain; that stretch reads WYKPTISREQ…ALPTKLVLPD (105 aa). Residues 1209–1353 enclose the PTB domain; the sequence is ACNVVYVGSV…NKVMLAQKNR (145 aa).

Belongs to the PTEN phosphatase protein family. As to quaternary structure, may interact (via SH2 domain) with receptor svh-2 (when tyrosine-phosphorylated). May interact (via C-terminus) with integrin pat-3. In terms of tissue distribution, expressed in ventral motor neurons, including ventral and dorsal D-type neurons, and in a subset of cells in the head.

Its subcellular location is the cell projection. It is found in the axon. The enzyme catalyses O-phospho-L-tyrosyl-[protein] + H2O = L-tyrosyl-[protein] + phosphate. Its function is as follows. Probable phosphatase which regulates axon regeneration after injury by linking the svh-2 and integrin signaling pathways. Not involved in axon regeneration after injury. In Caenorhabditis elegans, this protein is Tensin homolog.